The following is a 367-amino-acid chain: Bi-functional coumaroyl CoA and feruloyl CoA ortho-hydroxylase Diox4 (367 aa).

Positions 207-317 constitute a Fe2OG dioxygenase domain; that stretch reads IREPMLVGSR…RISVPLFVNP (111 aa). Residue Tyr223 participates in 2-oxoglutarate binding. The Fe cation site is built by His238, Asp240, and His298. 2-oxoglutarate contacts are provided by Arg308 and Ser310.

The protein belongs to the iron/ascorbate-dependent oxidoreductase family. It depends on L-ascorbate as a cofactor. The cofactor is Fe(2+).

The enzyme catalyses (E)-4-coumaroyl-CoA + 2-oxoglutarate + O2 = (E)-2,4-dihydroxycinnamoyl-CoA + succinate + CO2. It carries out the reaction (E)-feruloyl-CoA + 2-oxoglutarate + O2 = (E)-6-hydroxyferuloyl-CoA + succinate + CO2. The protein operates within phenylpropanoid metabolism. With respect to regulation, repressed by the competitive inhibitor psoralen, but not by umbelliferone, xanthotoxin, bergapten and isopimpinellin. Functionally, 2-oxoglutarate (OG)- and Fe(II)-dependent dioxygenase (2OGD) involved in scopoletin and umbelliferone biosynthesis. Converts feruloyl CoA into 6'-hydroxyferuloyl CoA, and p-coumaroyl CoA into 2,4-dihydroxycinnamoyl-CoA. Has no activity with cinnamic acid, caffeic acid, p-coumaric acid, ferulic acid, cinnamoyl-CoA and caffeoyl-CoA. This Ruta graveolens (Common rue) protein is Bi-functional coumaroyl CoA and feruloyl CoA ortho-hydroxylase Diox4.